A 186-amino-acid chain; its full sequence is CASP-like protein 7 (186 aa).

Topologically, residues 1 to 26 are cytoplasmic; the sequence is MKGGSIEAGEVSKDASPRKGVARGLS. A helical transmembrane segment spans residues 27-47; sequence IMDFILRIIAAVATLGSALAM. Residues 48-72 lie on the Extracellular side of the membrane; it reads GTTNETLPFATQFIKFRAEFDDLPS. N-linked (GlcNAc...) asparagine glycosylation occurs at Asn51. Residues 73 to 93 traverse the membrane as a helical segment; it reads LVFFVMANAVVCGYLVLSLMI. Topologically, residues 94–107 are cytoplasmic; it reads SVFHILRSTPVKSR. The chain crosses the membrane as a helical span at residues 108–128; it reads ILLVALDTVMLSLVTASASAA. At 129–162 the chain is on the extracellular side; that stretch reads TSIVYIAHNGNTGANWFAICQQYNNFCERISGSL. The chain crosses the membrane as a helical span at residues 163–183; that stretch reads IGSYIAVALFIILIMLSLVAI. At 184 to 186 the chain is on the cytoplasmic side; sequence SRN.

It belongs to the Casparian strip membrane proteins (CASP) family. Homodimer and heterodimers.

It localises to the cell membrane. Its function is as follows. Regulates membrane-cell wall junctions and localized cell wall deposition. Required for establishment of the Casparian strip membrane domain (CSD) and the subsequent formation of Casparian strips, a cell wall modification of the root endodermis that determines an apoplastic barrier between the intraorganismal apoplasm and the extraorganismal apoplasm and prevents lateral diffusion. In Glycine max (Soybean), this protein is CASP-like protein 7.